Reading from the N-terminus, the 200-residue chain is dTTP/UTP pyrophosphatase (200 aa).

Asp81 functions as the Proton acceptor in the catalytic mechanism.

It belongs to the Maf family. YhdE subfamily. Requires a divalent metal cation as cofactor.

It localises to the cytoplasm. It carries out the reaction dTTP + H2O = dTMP + diphosphate + H(+). The catalysed reaction is UTP + H2O = UMP + diphosphate + H(+). In terms of biological role, nucleoside triphosphate pyrophosphatase that hydrolyzes dTTP and UTP. May have a dual role in cell division arrest and in preventing the incorporation of modified nucleotides into cellular nucleic acids. The polypeptide is dTTP/UTP pyrophosphatase (Cupriavidus metallidurans (strain ATCC 43123 / DSM 2839 / NBRC 102507 / CH34) (Ralstonia metallidurans)).